The sequence spans 442 residues: Trigger factor (442 aa).

The PPIase FKBP-type domain occupies Y163–L248.

It belongs to the FKBP-type PPIase family. Tig subfamily.

The protein localises to the cytoplasm. It catalyses the reaction [protein]-peptidylproline (omega=180) = [protein]-peptidylproline (omega=0). Involved in protein export. Acts as a chaperone by maintaining the newly synthesized protein in an open conformation. Functions as a peptidyl-prolyl cis-trans isomerase. This Buchnera aphidicola subsp. Acyrthosiphon pisum (strain APS) (Acyrthosiphon pisum symbiotic bacterium) protein is Trigger factor (tig).